A 393-amino-acid chain; its full sequence is Putative F-box protein At1g55070 (393 aa).

One can recognise an F-box domain in the interval 29–74 (GEYFDRIPADLVIKILSKLSAKSMAKCRCVCKLLSSIIRQPNYNQL).

The chain is Putative F-box protein At1g55070 from Arabidopsis thaliana (Mouse-ear cress).